The following is a 373-amino-acid chain: D-alanine--D-alanine ligase (373 aa).

An ATP-grasp domain is found at 156 to 363 (KKLLAAEGLP…YPTLLAAMVD (208 aa)). Residue 184 to 239 (RERLGLPVFVKPARGGSSIGVSRVTAWDELPAAVALARRHDPKVIVEAAVIGRELE) participates in ATP binding. Residues Asp318, Glu330, and Asn332 each coordinate Mg(2+).

It belongs to the D-alanine--D-alanine ligase family. Mg(2+) serves as cofactor. The cofactor is Mn(2+).

Its subcellular location is the cytoplasm. The enzyme catalyses 2 D-alanine + ATP = D-alanyl-D-alanine + ADP + phosphate + H(+). The protein operates within cell wall biogenesis; peptidoglycan biosynthesis. Its function is as follows. Cell wall formation. In Mycolicibacterium smegmatis (strain ATCC 700084 / mc(2)155) (Mycobacterium smegmatis), this protein is D-alanine--D-alanine ligase.